Here is a 481-residue protein sequence, read N- to C-terminus: F-box/LRR-repeat protein At3g03360 (481 aa).

A disordered region spans residues 1 to 28; sequence MEKESQENSTRPDASSTVFSSSKSTCAS. Over residues 14–28 the composition is skewed to low complexity; the sequence is ASSTVFSSSKSTCAS. The region spanning 36-84 is the F-box domain; it reads GDLISRLPDDILQLILSYLPTRLAIKTSVLSRRWRHVWSDTWSLSFHRD. LRR repeat units lie at residues 118–145, 196–221, 295–320, 350–375, and 413–439; these read SRPD…SLYL, HCNI…LLFF, EADF…TLGA, ISRY…TIHP, and RRNV…ELIV.

The polypeptide is F-box/LRR-repeat protein At3g03360 (Arabidopsis thaliana (Mouse-ear cress)).